Consider the following 472-residue polypeptide: FAD-dependent monooxygenase ltmM (472 aa).

The helical transmembrane segment at 7–27 threads the bilayer; the sequence is VIIVGGSVAGLSLAHCLEKIG. Residues E34, G48, and R107 each contribute to the FAD site. A glycan (N-linked (GlcNAc...) asparagine) is linked at N186. 2 residues coordinate FAD: D306 and A319. Residues 450–470 traverse the membrane as a helical segment; sequence IVYALYLVAAAAFILYCLSSL.

It belongs to the paxM FAD-dependent monooxygenase family. Requires FAD as cofactor.

The protein resides in the membrane. Its pathway is secondary metabolite biosynthesis. In terms of biological role, FAD-dependent monooxygenase; part of the gene cluster that mediates the biosynthesis of lolitrems, indole-diterpene mycotoxins that are potent tremorgens in mammals, and are synthesized by clavicipitaceous fungal endophytes in association with their grass hosts. The geranylgeranyl diphosphate (GGPP) synthase ltmG is proposed to catalyze the first step in lolitremB biosynthesis. LtmG catalyzes a series of iterative condensations of isopentenyl diphosphate (IPP) with dimethylallyl diphosphate (DMAPP), geranyl diphosphate (GPP), and farnesyl diphosphate (FPP), to form GGPP. GGPP then condenses with indole-3-glycerol phosphate to form 3-geranylgeranylindole, an acyclic intermediate, to be incorporated into paxilline. Either ltmG or ltmC could be responsible for this step, as both are putative prenyl transferases. The FAD-dependent monooxygenase ltmM then catalyzes the epoxidation of the two terminal alkenes of the geranylgeranyl moiety, which is subsequently cyclized by ltmB, to paspaline. The cytochrome P450 monooxygenases ltmQ and ltmP can sequentially oxidize paspaline to terpendole E and terpendole F. Alternatively, ltmP converts paspaline to an intermediate which is oxidized by ltmQ to terpendole F. LtmF, ltmK, ltmE and ltmJ appear to be unique to the epichloe endophytes. The prenyltransferase ltmF is involved in the 27-hydroxyl-O-prenylation. The cytochrome P450 monooxygenase ltmK is required for the oxidative acetal ring formation. The multi-functional prenyltransferase ltmE is required for C20- and C21-prenylations of the indole ring of paspalanes and acts together with the cytochrome P450 monooxygenase ltmJ to yield lolitremanes by multiple oxidations and ring closures. The stereoisomer pairs of lolitriol and lolitrem N or lolitrem B and lolitrem F may be attributed to variations in the way in which ring closure can occur under the action of ltmJ. While the major product of this pathway is lolitrem B, the prenyl transferases and cytochrome P450 monooxygenases identified in this pathway have a remarkable versatility in their regio- and stereo-specificities to generate a diverse range of metabolites that are products of a metabolic grid rather than a linear pathway. This Epichloe festucae var. lolii (Neotyphodium lolii) protein is FAD-dependent monooxygenase ltmM (ltmM).